A 263-amino-acid chain; its full sequence is UPF0739 protein C1orf74 homolog (263 aa).

This sequence belongs to the UPF0739 family.

The protein is UPF0739 protein C1orf74 homolog of Mus musculus (Mouse).